A 1241-amino-acid chain; its full sequence is DNA-directed RNA polymerase subunit beta (1241 aa).

Residues 1201 to 1224 (AEEEQDTDVDYITEDDFESPDPEI) form a disordered region.

The protein belongs to the RNA polymerase beta chain family. The RNAP catalytic core consists of 2 alpha, 1 beta, 1 beta' and 1 omega subunit. When a sigma factor is associated with the core the holoenzyme is formed, which can initiate transcription.

It catalyses the reaction RNA(n) + a ribonucleoside 5'-triphosphate = RNA(n+1) + diphosphate. DNA-dependent RNA polymerase catalyzes the transcription of DNA into RNA using the four ribonucleoside triphosphates as substrates. In Alkaliphilus oremlandii (strain OhILAs) (Clostridium oremlandii (strain OhILAs)), this protein is DNA-directed RNA polymerase subunit beta.